We begin with the raw amino-acid sequence, 274 residues long: Urease accessory protein UreD (274 aa).

It belongs to the UreD family. UreD, UreF and UreG form a complex that acts as a GTP-hydrolysis-dependent molecular chaperone, activating the urease apoprotein by helping to assemble the nickel containing metallocenter of UreC. The UreE protein probably delivers the nickel.

The protein resides in the cytoplasm. Required for maturation of urease via the functional incorporation of the urease nickel metallocenter. This is Urease accessory protein UreD from Lachnoclostridium phytofermentans (strain ATCC 700394 / DSM 18823 / ISDg) (Clostridium phytofermentans).